A 464-amino-acid chain; its full sequence is MAVYNYDVVVLGSGPAGEGAAMNAAKAGRKVAMVDSRREVGGNCTHLGTIPSKALRHSVKQIIQFNTNPMFRAIGEPRWFSFPDVLKNAEMVISKQVASRTSYYARNRVDVFFGTGSFADETSVNVVCANGVVEKLVANQIIIATGSRPYRPADIDFSHKRIYDSDTILSLGHTPRKLIIYGAGVIGCEYASIFSGLGVLVELVDNRDQLLSFLDSEISQALSYHFSNNNVMVRHNEEYERVEGLDNGVVLHLKSGKKIKADALLWCNGRTGNTDKLGLENIGLKANGRGQIEVDEAYRTSVSNVYGAGDVIGWPSLASAAYDQGRSAAGSMVDNGSWRYVNDVPTGIYTIPEISSIGKNEHELTQAKVPYEVGKAFFKGMARAQISGERVGMLKILFHRETLEVLGVHCFGDQASEIVHIGQAIMSQPGEANTIKYFVNTTFNYPTMAEAYRVAAYDGLNRLF.

35–44 (DSRREVGGNC) is an FAD binding site.

Belongs to the class-I pyridine nucleotide-disulfide oxidoreductase family. Requires FAD as cofactor.

The protein localises to the cytoplasm. It catalyses the reaction NAD(+) + NADPH = NADH + NADP(+). Functionally, conversion of NADPH, generated by peripheral catabolic pathways, to NADH, which can enter the respiratory chain for energy generation. The sequence is that of Soluble pyridine nucleotide transhydrogenase from Pseudomonas syringae pv. tomato (strain ATCC BAA-871 / DC3000).